The chain runs to 715 residues: D-ribulokinase YDR109C (715 aa).

The tract at residues Met-1 to Ile-27 is disordered.

Belongs to the FGGY kinase family.

It catalyses the reaction D-ribulose + ATP = D-ribulose 5-phosphate + ADP + H(+). Its pathway is carbohydrate metabolism; pentose and glucuronate interconversion. Its function is as follows. Catalyzes ATP-dependent phosphorylation of D-ribulose at C-5 to form D-ribulose 5-phosphate. Postulated to function in a metabolite repair mechanism by preventing toxic accumulation of free D-ribulose formed by non-specific phosphatase activities. Alternatively, may play a role in regulating D-ribulose 5-phosphate recycling in the pentose phosphate pathway. This Saccharomyces cerevisiae (strain ATCC 204508 / S288c) (Baker's yeast) protein is D-ribulokinase YDR109C.